We begin with the raw amino-acid sequence, 201 residues long: Recombination protein RecR (201 aa).

A C4-type zinc finger spans residues C57–C72. The Toprim domain occupies T81–P176.

The protein belongs to the RecR family.

Its function is as follows. May play a role in DNA repair. It seems to be involved in an RecBC-independent recombinational process of DNA repair. It may act with RecF and RecO. The protein is Recombination protein RecR of Colwellia psychrerythraea (strain 34H / ATCC BAA-681) (Vibrio psychroerythus).